The following is a 297-amino-acid chain: N-acetylmuramic acid 6-phosphate etherase (297 aa).

Residues 55–218 (AAAALKSGGR…STGAMVKFGK (164 aa)) enclose the SIS domain. The Proton donor role is filled by Glu83. The active site involves Glu114.

This sequence belongs to the GCKR-like family. MurNAc-6-P etherase subfamily. As to quaternary structure, homodimer.

It carries out the reaction N-acetyl-D-muramate 6-phosphate + H2O = N-acetyl-D-glucosamine 6-phosphate + (R)-lactate. Its pathway is amino-sugar metabolism; 1,6-anhydro-N-acetylmuramate degradation. It participates in amino-sugar metabolism; N-acetylmuramate degradation. It functions in the pathway cell wall biogenesis; peptidoglycan recycling. Its function is as follows. Specifically catalyzes the cleavage of the D-lactyl ether substituent of MurNAc 6-phosphate, producing GlcNAc 6-phosphate and D-lactate. Together with AnmK, is also required for the utilization of anhydro-N-acetylmuramic acid (anhMurNAc) either imported from the medium or derived from its own cell wall murein, and thus plays a role in cell wall recycling. The chain is N-acetylmuramic acid 6-phosphate etherase from Salmonella paratyphi B (strain ATCC BAA-1250 / SPB7).